The primary structure comprises 432 residues: Adenylosuccinate synthetase (432 aa).

GTP-binding positions include 13–19 and 41–43; these read GDEGKGK and GHT. The active-site Proton acceptor is the Asp-14. Asp-14 and Gly-41 together coordinate Mg(2+). Residues 14–17, 39–42, Thr-130, Arg-144, Gln-225, Thr-240, and Arg-304 each bind IMP; these read DEGK and NAGH. His-42 functions as the Proton donor in the catalytic mechanism. Position 300-306 (300-306) interacts with substrate; sequence STTGRRR. GTP contacts are provided by residues Arg-306, 332–334, and 415–417; these read KID and STG.

Belongs to the adenylosuccinate synthetase family. In terms of assembly, homodimer. Requires Mg(2+) as cofactor.

The protein resides in the cytoplasm. The catalysed reaction is IMP + L-aspartate + GTP = N(6)-(1,2-dicarboxyethyl)-AMP + GDP + phosphate + 2 H(+). It functions in the pathway purine metabolism; AMP biosynthesis via de novo pathway; AMP from IMP: step 1/2. Plays an important role in the de novo pathway of purine nucleotide biosynthesis. Catalyzes the first committed step in the biosynthesis of AMP from IMP. The polypeptide is Adenylosuccinate synthetase (Blochmanniella pennsylvanica (strain BPEN)).